Here is a 1050-residue protein sequence, read N- to C-terminus: Self-sufficient cytochrome P450 monooxygenase CYP505E5 (1050 aa).

Position 405 (C405) interacts with heme. Positions 467–491 are disordered; it reads RRSMLVARDGSSGESSNHLAEARGD. One can recognise a Flavodoxin-like domain in the interval 500 to 641; the sequence is VSFFYGSNSG…DLEAWEETSL (142 aa). FMN contacts are provided by residues 506–510 and 585–617; these read SNSGT and VFGC…TRLA. One can recognise an FAD-binding FR-type domain in the interval 679–907; that stretch reads KGLIEAKVTA…RPAKESFHLP (229 aa).

This sequence in the N-terminal section; belongs to the cytochrome P450 family. FAD is required as a cofactor. The cofactor is FMN. It depends on heme as a cofactor.

It catalyses the reaction 2 oxidized [cytochrome P450] + NADPH = 2 reduced [cytochrome P450] + NADP(+) + H(+). The enzyme catalyses an organic molecule + reduced [NADPH--hemoprotein reductase] + O2 = an alcohol + oxidized [NADPH--hemoprotein reductase] + H2O + H(+). The catalysed reaction is dodecanoate + reduced [NADPH--hemoprotein reductase] + O2 = 5-hydroxydodecanoate + oxidized [NADPH--hemoprotein reductase] + H2O + H(+). It carries out the reaction tetradecanoate + reduced [NADPH--hemoprotein reductase] + O2 = 7-hydroxytetradecanoate + oxidized [NADPH--hemoprotein reductase] + H2O + H(+). It catalyses the reaction dodecan-1-ol + reduced [NADPH--hemoprotein reductase] + O2 = 1,5-dodecanediol + oxidized [NADPH--hemoprotein reductase] + H2O + H(+). The enzyme catalyses dodecan-1-ol + reduced [NADPH--hemoprotein reductase] + O2 = 1,4-dodecanediol + oxidized [NADPH--hemoprotein reductase] + H2O + H(+). The catalysed reaction is dodecan-1-ol + reduced [NADPH--hemoprotein reductase] + O2 = 1,6-dodecanediol + oxidized [NADPH--hemoprotein reductase] + H2O + H(+). Self-sufficient cytochrome P450 monooxygenase that catalyzes the regioselective in-chain hydroxylation of alkanes, fatty alcohols, and fatty acids at the omega-7 position. Performs hydroxylation of C10-C16 n-alkanes and C12 and C14 fatty alcohols; and thereby enables the one step biocatalytic synthesis of rare alcohols such as 5-dodecanol and 7-tetradecanol. Converts 1-dodecanol into 1,5-dodecanediol as major product with very little sub-terminally hydroxylated products with the 1,4-dodecanediol and 1,6-dodecanediol more abundant. Converts dodecanoic acid to 5-hydroxydodecanoic acid which can be further converted into delta-dodecalactone by lactonization of the 5-hydroxy acid at low pH. Also gives sub-terminal hydroxylation of dodecanoic acid with 9-hydroxydodecanoic acid being the second most abundant product. This is Self-sufficient cytochrome P450 monooxygenase CYP505E5 from Aspergillus niger.